Here is a 397-residue protein sequence, read N- to C-terminus: Dual specificity mitogen-activated protein kinase kinase 4 (397 aa).

The segment at Met1–Lys38 is disordered. An N-acetylalanine modification is found at Ala2. Residues Ser7–Gly20 are compositionally biased toward gly residues. Positions Met35–Pro50 are d domain. Arg56 is subject to Asymmetric dimethylarginine; alternate. Arg56 carries the omega-N-methylarginine; alternate modification. The residue at position 88 (Ser88) is a Phosphoserine. The Protein kinase domain occupies Leu100–Leu366. Residues Ile106 to Val114 and Lys129 each bind ATP. Asp227 (proton acceptor) is an active-site residue. Ser255 bears the Phosphoserine mark. Thr259 carries the phosphothreonine modification. The DVD domain stretch occupies residues His362–Gln385.

Belongs to the protein kinase superfamily. STE Ser/Thr protein kinase family. MAP kinase kinase subfamily. Interacts with SPAG9. Interacts (via its D domain) with its substrates MAPK8/JNK1, MAPK9/JNK2, MAPK10/JNK3, MAPK11 and MAPK14. Interacts (via its DVD domain) with MAP3Ks activators like MAP3K1/MEKK1 and MAP3K11/MLK3. Interacts with ARRB1, ARRB2 and MAPK8IP3/JIP3. Activated by phosphorylation on Ser-255 and Thr-259 by MAP kinase kinase kinases (MAP3Ks). As to expression, strong expression is detected in most of the central nervous system and in liver and thymus during early stages of development. While expression in nervous system increases over time, expression in fetal liver and thymus gradually decreases as embryogenesis proceeds. High level of expression in the central nervous system persists throughout postnatal development and remained at a stable level in adult brain.

The protein resides in the cytoplasm. It is found in the nucleus. The catalysed reaction is L-seryl-[protein] + ATP = O-phospho-L-seryl-[protein] + ADP + H(+). It catalyses the reaction L-threonyl-[protein] + ATP = O-phospho-L-threonyl-[protein] + ADP + H(+). The enzyme catalyses L-tyrosyl-[protein] + ATP = O-phospho-L-tyrosyl-[protein] + ADP + H(+). With respect to regulation, activated in response to a variety of cellular stresses, including UV and gamma-irradiation, heat shock, hyperosmolarity, T-cell receptor stimulation, peroxide and inflammatory cytokines. Also activated by developmental cues. MAP2K4/MKK4 is activated by the majority of MKKKs, such as MAP3K5/ASK1, MAP3K1/MEKK1, MAP3K7/TAK1, MAP3K10/MLK2, MAP3K11/MLK3, MAP3K12/DLK and MAP3K13/LZK. In terms of biological role, dual specificity protein kinase which acts as an essential component of the MAP kinase signal transduction pathway. Essential component of the stress-activated protein kinase/c-Jun N-terminal kinase (SAP/JNK) signaling pathway. With MAP2K7/MKK7, is the one of the only known kinase to directly activate the stress-activated protein kinase/c-Jun N-terminal kinases MAPK8/JNK1, MAPK9/JNK2 and MAPK10/JNK3. MAP2K4/MKK4 and MAP2K7/MKK7 both activate the JNKs by phosphorylation, but they differ in their preference for the phosphorylation site in the Thr-Pro-Tyr motif. MAP2K4 shows preference for phosphorylation of the Tyr residue and MAP2K7/MKK7 for the Thr residue. The phosphorylation of the Thr residue by MAP2K7/MKK7 seems to be the prerequisite for JNK activation at least in response to pro-inflammatory cytokines, while other stimuli activate both MAP2K4/MKK4 and MAP2K7/MKK7 which synergistically phosphorylate JNKs. MAP2K4 is required for maintaining peripheral lymphoid homeostasis. The MKK/JNK signaling pathway is also involved in mitochondrial death signaling pathway, including the release cytochrome c, leading to apoptosis. Whereas MAP2K7/MKK7 exclusively activates JNKs, MAP2K4/MKK4 additionally activates the p38 MAPKs MAPK11, MAPK12, MAPK13 and MAPK14. This is Dual specificity mitogen-activated protein kinase kinase 4 (Map2k4) from Mus musculus (Mouse).